A 128-amino-acid polypeptide reads, in one-letter code: MTTARALSDGLAYLLACFNAFCIQAHLTSRFSPAFSKNLATQLPHHNKAIFWWLGVSDETLRYMFVSLNAGLGLLLALPGWRSTGLKVALALLCVGFTSDMKLKEKWLLHFLSHLVLLSITMAAIYVR.

Positions 1–36 (MTTARALSDGLAYLLACFNAFCIQAHLTSRFSPAFS) are cleaved as a signal peptide. Helical transmembrane passes span 61-81 (LRYM…LPGW) and 107-127 (WLLH…AIYV).

The protein belongs to the cyclic ether formation enzyme xenC family.

The protein localises to the membrane. It participates in mycotoxin biosynthesis. Its function is as follows. Cyclic ether formation enzyme; part of the gene cluster that mediates the biosynthesis of GKK1032, fungal natural products containing a macrocyclic para-cyclophane connected to a decahydrofluorene ring system that show potent antitumor activities. Within the pathway, gkaZ functions synergistically with gkaB and gkaX to form the cyclophane. The pathway begins with the PKS-NRPS gkaA which, with the help of the trans-enoyl reductase gkaC, synthesizes the polyketide-tyrosyl acyl thioester product which can be reductively off-loaded by the terminal reductase (R) domain in gkaA. The alpha/beta hydrolase gkaG is then required to catalyze the subsequent Knoevenagel condensation that affords the 3-pyrrolin-2-one ring, whereas the three proteins gkaB, gkaX and gkaZ then function synergistically to form the cyclophane. The protein is Cyclic ether formation enzyme gkaZ of Penicillium citrinum.